A 469-amino-acid polypeptide reads, in one-letter code: 3-isopropylmalate dehydratase large subunit (469 aa).

[4Fe-4S] cluster contacts are provided by cysteine 349, cysteine 410, and cysteine 413.

It belongs to the aconitase/IPM isomerase family. LeuC type 1 subfamily. Heterodimer of LeuC and LeuD. Requires [4Fe-4S] cluster as cofactor.

The enzyme catalyses (2R,3S)-3-isopropylmalate = (2S)-2-isopropylmalate. Its pathway is amino-acid biosynthesis; L-leucine biosynthesis; L-leucine from 3-methyl-2-oxobutanoate: step 2/4. Functionally, catalyzes the isomerization between 2-isopropylmalate and 3-isopropylmalate, via the formation of 2-isopropylmaleate. This Azoarcus sp. (strain BH72) protein is 3-isopropylmalate dehydratase large subunit.